A 189-amino-acid chain; its full sequence is HTH-type transcriptional regulator Hpr (189 aa).

An HTH marR-type domain is found at 12–156; it reads ALLYSHKIVQ…ISAIVRRLYG (145 aa). The H-T-H motif DNA-binding region spans 62-85; the sequence is ISEIAKYGVMHVSTAFNFSKKLED.

Homodimer.

In terms of biological role, negative regulator of protease production and sporulation. In Exiguobacterium sibiricum (strain DSM 17290 / CCUG 55495 / CIP 109462 / JCM 13490 / 255-15), this protein is HTH-type transcriptional regulator Hpr.